We begin with the raw amino-acid sequence, 185 residues long: Monothiol glutaredoxin-S4, mitochondrial (185 aa).

The transit peptide at 1-36 (MARLMSSALIRGLVRSSCSPTVAAVAQPTIHQFRNY) directs the protein to the mitochondrion. Residues 37-74 (SSGLGGDSTATGDSSSTRVAADPDTHQDFQPTTKSSNM) form a disordered region. Residues 43–53 (DSTATGDSSST) are compositionally biased toward low complexity. The span at 64 to 74 (DFQPTTKSSNM) shows a compositional bias: polar residues. Residues 77 to 179 (DDIVSQDIKE…DVLGDIAQKR (103 aa)) enclose the Glutaredoxin domain. Lysine 94 lines the glutathione pocket. Position 102 (cysteine 102) interacts with [2Fe-2S] cluster. Glutathione is bound by residues lysine 131, phenylalanine 143, and 156–157 (SD).

The protein belongs to the glutaredoxin family. CGFS subfamily.

The protein resides in the mitochondrion. Its function is as follows. May only reduce GSH-thiol disulfides, but not protein disulfides. This chain is Monothiol glutaredoxin-S4, mitochondrial (GRXS4), found in Oryza sativa subsp. japonica (Rice).